Consider the following 524-residue polypeptide: Bifunctional purine biosynthesis protein PurH (524 aa).

One can recognise an MGS-like domain in the interval 1–149; that stretch reads MSDPVIKRAL…KNNESVTVVT (149 aa).

The protein belongs to the PurH family.

The enzyme catalyses (6R)-10-formyltetrahydrofolate + 5-amino-1-(5-phospho-beta-D-ribosyl)imidazole-4-carboxamide = 5-formamido-1-(5-phospho-D-ribosyl)imidazole-4-carboxamide + (6S)-5,6,7,8-tetrahydrofolate. The catalysed reaction is IMP + H2O = 5-formamido-1-(5-phospho-D-ribosyl)imidazole-4-carboxamide. Its pathway is purine metabolism; IMP biosynthesis via de novo pathway; 5-formamido-1-(5-phospho-D-ribosyl)imidazole-4-carboxamide from 5-amino-1-(5-phospho-D-ribosyl)imidazole-4-carboxamide (10-formyl THF route): step 1/1. It participates in purine metabolism; IMP biosynthesis via de novo pathway; IMP from 5-formamido-1-(5-phospho-D-ribosyl)imidazole-4-carboxamide: step 1/1. The sequence is that of Bifunctional purine biosynthesis protein PurH from Chlorobium chlorochromatii (strain CaD3).